Reading from the N-terminus, the 157-residue chain is Probable succinate transporter subunit YjjB (157 aa).

Helical transmembrane passes span leucine 8–phenylalanine 28, methionine 50–valine 70, valine 87–isoleucine 107, and phenylalanine 129–tryptophan 149.

This sequence belongs to the ThrE exporter (TC 2.A.79) family. As to quaternary structure, the transporter is composed of YjjB and YjjP.

It localises to the cell inner membrane. Involved in succinate export with YjjP. Both proteins are required for export. In Shigella flexneri serotype 5b (strain 8401), this protein is Probable succinate transporter subunit YjjB.